A 248-amino-acid polypeptide reads, in one-letter code: 2,3-bisphosphoglycerate-dependent phosphoglycerate mutase (248 aa).

Substrate-binding positions include 8–15 (RHGESTWN), 21–22 (TG), arginine 60, 87–90 (ERHY), lysine 98, 114–115 (RR), and 183–184 (GN). Catalysis depends on histidine 9, which acts as the Tele-phosphohistidine intermediate. Residue glutamate 87 is the Proton donor/acceptor of the active site.

It belongs to the phosphoglycerate mutase family. BPG-dependent PGAM subfamily. Homodimer.

It catalyses the reaction (2R)-2-phosphoglycerate = (2R)-3-phosphoglycerate. It participates in carbohydrate degradation; glycolysis; pyruvate from D-glyceraldehyde 3-phosphate: step 3/5. Functionally, catalyzes the interconversion of 2-phosphoglycerate and 3-phosphoglycerate. The sequence is that of 2,3-bisphosphoglycerate-dependent phosphoglycerate mutase from Burkholderia ambifaria (strain ATCC BAA-244 / DSM 16087 / CCUG 44356 / LMG 19182 / AMMD) (Burkholderia cepacia (strain AMMD)).